The chain runs to 192 residues: CASP-like protein 4C1 (192 aa).

Residues methionine 1–glutamate 11 show a composition bias toward polar residues. The segment at methionine 1–proline 23 is disordered. Residues methionine 1–asparagine 40 lie on the Cytoplasmic side of the membrane. The span at serine 14–proline 23 shows a compositional bias: pro residues. Residues leucine 41–methionine 61 form a helical membrane-spanning segment. Topologically, residues leucine 62–tyrosine 75 are extracellular. A helical membrane pass occupies residues valine 76–tryptophan 96. The Cytoplasmic segment spans residues glutamate 97–glutamate 107. The helical transmembrane segment at isoleucine 108–alanine 128 threads the bilayer. At aspartate 129–tyrosine 156 the chain is on the extracellular side. The helical transmembrane segment at isoleucine 157–glycine 177 threads the bilayer. Topologically, residues phenylalanine 178–valine 192 are cytoplasmic.

The protein belongs to the Casparian strip membrane proteins (CASP) family. As to quaternary structure, homodimer and heterodimers.

The protein localises to the cell membrane. The protein is CASP-like protein 4C1 of Ricinus communis (Castor bean).